A 337-amino-acid chain; its full sequence is Anthranilate phosphoribosyltransferase (337 aa).

Residues G81, 84-85 (GD), S89, 91-94 (NVST), 109-117 (KHGNRAATS), and A121 each bind 5-phospho-alpha-D-ribose 1-diphosphate. G81 contributes to the anthranilate binding site. S93 contributes to the Mg(2+) binding site. N112 serves as a coordination point for anthranilate. R167 contacts anthranilate. Mg(2+)-binding residues include D226 and E227.

The protein belongs to the anthranilate phosphoribosyltransferase family. Homodimer. Requires Mg(2+) as cofactor.

The enzyme catalyses N-(5-phospho-beta-D-ribosyl)anthranilate + diphosphate = 5-phospho-alpha-D-ribose 1-diphosphate + anthranilate. Its pathway is amino-acid biosynthesis; L-tryptophan biosynthesis; L-tryptophan from chorismate: step 2/5. Functionally, catalyzes the transfer of the phosphoribosyl group of 5-phosphorylribose-1-pyrophosphate (PRPP) to anthranilate to yield N-(5'-phosphoribosyl)-anthranilate (PRA). The protein is Anthranilate phosphoribosyltransferase of Methylorubrum populi (strain ATCC BAA-705 / NCIMB 13946 / BJ001) (Methylobacterium populi).